A 770-amino-acid chain; its full sequence is Jhy protein (770 aa).

5 disordered regions span residues 1–249, 295–438, 493–527, 595–647, and 708–740; these read MNKY…SKQY, TVQN…SFVS, HRHE…PQAE, ESQL…KRDV, and DYAK…KEGG. The segment covering 57-71 has biased composition (basic and acidic residues); the sequence is SWSDIKDQIQDKDME. A compositionally biased stretch (acidic residues) spans 72 to 85; that stretch reads PDSLEEDSPSETEE. A compositionally biased stretch (basic and acidic residues) spans 112-134; that stretch reads HQVEDKYSDLRYDPNWKNKREEG. Residues 218-229 are compositionally biased toward low complexity; that stretch reads SGLSQYLKSSSS. Positions 295–314 are enriched in basic and acidic residues; the sequence is TVQNDKEVENTFMDPEDKWH. Polar residues predominate over residues 340 to 354; the sequence is RGQSSDAANGQQPSR. A compositionally biased stretch (basic residues) spans 355–370; it reads RTAKARVRKQRKHQKG. Residues 383–398 show a composition bias toward low complexity; that stretch reads QNNQNNPFQQPQNQRQ. Residues 410-438 show a composition bias toward polar residues; it reads AQTNASNPNLQDARTLTHNPKVTSDSFVS. A compositionally biased stretch (basic and acidic residues) spans 493–509; the sequence is HRHESPSQRAPQSDHHM. Basic residues-rich tracts occupy residues 510–521 and 625–642; these read NTHRSTKTKKPA and GKRH…LKGY.

Expressed in the brain, specifically in hypothalamus, pineal gland, and ependymal cells of the aqueduct of Sylvius, as well as in the choroid plexus of the third ventricle. Expressed in the ependymal cells lining the lateral ventricles (at protein level).

Functionally, required for the normal development of cilia in brain ependymal cells lining the ventricular surfaces. The sequence is that of Jhy protein from Mus musculus (Mouse).